The following is a 261-amino-acid chain: Putative phosphite transport system permease protein HtxE (261 aa).

The ABC transmembrane type-1 domain maps to 47–253 (EATTETVEVL…VFVFVLDQLQ (207 aa)). 3 helical membrane passes run 122–142 (LIVA…GVLA), 203–220 (RNLR…GGIG), and 229–249 (MFQY…VFVL).

This sequence belongs to the binding-protein-dependent transport system permease family.

Its subcellular location is the cell inner membrane. Functionally, probably forms part of a binding-protein-dependent hypophosphite transporter. The protein is Putative phosphite transport system permease protein HtxE (htxE) of Stutzerimonas stutzeri (Pseudomonas stutzeri).